The sequence spans 175 residues: Cytochrome c homolog (175 aa).

Topologically, residues 1 to 8 are cytoplasmic; the sequence is MSGKELNK. A helical; Signal-anchor transmembrane segment spans residues 9-29; sequence IVAAILFASLIAMMVGFVANI. Residues 30-175 lie on the Periplasmic side of the membrane; that stretch reads LYKPTLELQH…LFLKTYVHDK (146 aa). Positions 84, 87, 88, and 150 each coordinate heme c.

It belongs to the cytochrome c family. Binds 1 heme c group covalently per subunit.

The protein resides in the cell membrane. Its function is as follows. May be involved in electron transfer from bc1 complex to aa3. The chain is Cytochrome c homolog (cycM) from Rickettsia conorii (strain ATCC VR-613 / Malish 7).